Reading from the N-terminus, the 201-residue chain is UPF0301 protein RHA1_ro03630 (201 aa).

This sequence belongs to the UPF0301 (AlgH) family.

The chain is UPF0301 protein RHA1_ro03630 from Rhodococcus jostii (strain RHA1).